A 432-amino-acid chain; its full sequence is MANVVVVGTQWGDEGKGKIVDRYAEDAKVIARFQGGNNAGHTLVVKGEQTILHLIPSGILHNHKVCIIGNGVVVDPLVLIQEIESLKGRGLFPPDTRLFVSEKAHVIMPYHRQLDLARETRRSGVKIGTTGRGIGPAYEDKISRVGIRICDLLDETLFREKLALNVEEKNFTLTSLFGEPPVQEQEIFDEYQNYAEKIRSYAADTSLILEREMKLGKPILFEGAQGCHLDIEHGTYPFVTSSSTVAGNASCGTGIGPSSLNEVIGICKAYTTRVGEGPFLTELNDEIGDRLQRVGQEFGATTGRRRRCGWLDMVLVRHAVRVSGITGLAITKLDVLTGLKTLKLCVGYQSGNDLYPESVPPNPRILQQCQPVYEEMAGWTEDIRGARQMDDLPSNARRYLERLESLTGVPVILVSVGAGREETIVLKNPFSS.

GTP is bound by residues 12-18 (GDEGKGK) and 40-42 (GHT). D13 (proton acceptor) is an active-site residue. Positions 13 and 40 each coordinate Mg(2+). Residues 13–16 (DEGK), 38–41 (NAGH), T130, R144, Q225, T240, and R304 contribute to the IMP site. Catalysis depends on H41, which acts as the Proton donor. Substrate is bound at residue 300-306 (ATTGRRR). GTP is bound by residues R306, 332–334 (KLD), and 415–417 (SVG).

Belongs to the adenylosuccinate synthetase family. Homodimer. The cofactor is Mg(2+).

It localises to the cytoplasm. It carries out the reaction IMP + L-aspartate + GTP = N(6)-(1,2-dicarboxyethyl)-AMP + GDP + phosphate + 2 H(+). Its pathway is purine metabolism; AMP biosynthesis via de novo pathway; AMP from IMP: step 1/2. Plays an important role in the de novo pathway of purine nucleotide biosynthesis. Catalyzes the first committed step in the biosynthesis of AMP from IMP. The protein is Adenylosuccinate synthetase of Syntrophus aciditrophicus (strain SB).